Consider the following 457-residue polypeptide: MYSFNTLRLYLWETIVFFSLAASKEAEAARSASKPMSPSDFLDKLMGRTSGYDARIRPNFKGPPVNVSCNIFINSFGSIAETTMDYRVNIFLRQQWNDPRLAYNEYPDDSLDLDPSMLDSIWKPDLFFANEKGAHFHEITTDNKLLRISRNGNVLYSIRITLTLACPMDLKNFPMDVQTCIMQLESFGYTMNDLIFEWQEQGAVQVADGLTLPQFILKEEKDLRYCTKHYNTGKFTCIEARFHLERQMGYYLIQMYIPSLLIVILSWISFWINMDAAPARVGLGITTVLTMTTQSSGSRASLPKVSYVKAIDIWMAVCLLFVFSALLEYAAVNFVSRQHKELLRFRRKRRHHKSPMLNLFQEDEAGEGRFNFSAYGMGPACLQAKDGISVKGANNSNTTNPPPAPSKSPEEMRKLFIQRAKKIDKISRIGFPMAFLIFNMFYWIIYKIVRREDVHNQ.

Residues 1–28 (MYSFNTLRLYLWETIVFFSLAASKEAEA) form the signal peptide. Residues 29–250 (ARSASKPMSP…RFHLERQMGY (222 aa)) are Extracellular-facing. N-linked (GlcNAc...) asparagine glycosylation is present at Asn66. Residues Arg93 and Ser157 each contribute to the glycine site. Cys166 and Cys180 are disulfide-bonded. Positions 220 and 222 each coordinate Zn(2+). A disulfide bridge connects residues Cys226 and Cys237. 230-235 (YNTGKF) lines the strychnine pocket. Position 232 (Thr232) interacts with glycine. Residue His243 participates in Zn(2+) binding. Residues 251-272 (YLIQMYIPSLLIVILSWISFWI) traverse the membrane as a helical segment. Topologically, residues 273-277 (NMDAA) are cytoplasmic. The chain crosses the membrane as a helical span at residues 278–298 (PARVGLGITTVLTMTTQSSGS). Over 299 to 309 (RASLPKVSYVK) the chain is Extracellular. The helical transmembrane segment at 310–330 (AIDIWMAVCLLFVFSALLEYA) threads the bilayer. Over 331–425 (AVNFVSRQHK…FIQRAKKIDK (95 aa)) the chain is Cytoplasmic. The disordered stretch occupies residues 391-410 (KGANNSNTTNPPPAPSKSPE). The chain crosses the membrane as a helical span at residues 426–446 (ISRIGFPMAFLIFNMFYWIIY). The Extracellular portion of the chain corresponds to 447–457 (KIVRREDVHNQ).

The protein belongs to the ligand-gated ion channel (TC 1.A.9) family. Glycine receptor (TC 1.A.9.3) subfamily. GLRA1 sub-subfamily. As to quaternary structure, interacts with GLRB to form heteropentameric channels; this is probably the predominant form in vivo. Heteropentamer composed of four GLRA1 subunits and one GLRB subunit. Heteropentamer composed of two GLRA1 and three GLRB. Heteropentamer composed of three GLRA1 and two GLRB. Homopentamer (in vitro). Both homopentamers and heteropentamers form functional ion channels, but their characteristics are subtly different. Detected on spinal cord neurons (at protein level). Detected in spinal cord.

The protein localises to the postsynaptic cell membrane. It is found in the synapse. The protein resides in the perikaryon. Its subcellular location is the cell projection. It localises to the dendrite. The protein localises to the cell membrane. It carries out the reaction chloride(in) = chloride(out). Its activity is regulated as follows. Channel opening is triggered by extracellular glycine. Channel characteristics depend on the subunit composition; heteropentameric channels are activated by lower glycine levels and display faster desensitization. Functionally, subunit of heteromeric glycine-gated chloride channels. Plays an important role in the down-regulation of neuronal excitability. Contributes to the generation of inhibitory postsynaptic currents. Channel activity is potentiated by ethanol. Potentiation of channel activity by intoxicating levels of ethanol contribute to the sedative effects of ethanol. This is Glycine receptor subunit alpha-1 (GLRA1) from Bos taurus (Bovine).